The primary structure comprises 1733 residues: DNA-directed RNA polymerase II subunit RPB1 (1733 aa).

8 residues coordinate Zn(2+): Cys67, Cys70, Cys77, His80, Cys107, Cys110, Cys148, and Cys167. The segment at 248–260 (PSISFNESQRGED) is lid loop. Residues 306–323 (NDIAGQPQALQKSGRPVK) are rudder loop. Mg(2+) is bound by residues Asp481, Asp483, and Asp485. Residue Lys695 forms a Glycyl lysine isopeptide (Lys-Gly) (interchain with G-Cter in ubiquitin) linkage. Residues 810–822 (PQEFFFHAMGGRE) form a bridging helix region. Residues Lys1246 and Lys1350 each participate in a glycyl lysine isopeptide (Lys-Gly) (interchain with G-Cter in ubiquitin) cross-link. Thr1471 carries the post-translational modification Phosphothreonine. Residues 1537-1733 (VSSPGFSPTS…QKHNENENSR (197 aa)) form a disordered region. Positions 1538–1719 (SSPGFSPTSP…YSPGSPAYSP (182 aa)) are enriched in low complexity. Tandem repeats lie at residues 1549-1555 (YSPTSPA), 1556-1562 (YSPTSPS), 1563-1569 (YSPTSPS), 1570-1576 (YSPTSPS), 1577-1583 (YSPTSPS), 1584-1590 (YSPTSPS), 1591-1597 (YSPTSPS), 1598-1604 (YSPTSPS), 1605-1611 (YSPTSPS), 1612-1618 (YSPTSPS), 1619-1625 (YSPTSPS), 1626-1632 (YSPTSPS), 1633-1639 (YSPTSPS), 1640-1646 (YSPTSPS), 1647-1653 (YSPTSPS), 1654-1660 (YSPTSPA), 1661-1667 (YSPTSPS), 1668-1674 (YSPTSPS), 1675-1681 (YSPTSPS), 1682-1688 (YSPTSPS), 1689-1695 (YSPTSPN), 1696-1702 (YSPTSPS), and 1703-1709 (YSPTSPG). The tract at residues 1549–1716 (YSPTSPAYSP…SPGYSPGSPA (168 aa)) is C-terminal domain (CTD); 24 X 7 AA approximate tandem repeats of Y-S-P-T-S-P-[A-S-N-G]. The stretch at 1710–1716 (YSPGSPA) is one 24; approximate repeat. The span at 1720-1733 (KQDEQKHNENENSR) shows a compositional bias: basic and acidic residues.

Belongs to the RNA polymerase beta' chain family. In terms of assembly, component of the RNA polymerase II (Pol II) complex consisting of 12 subunits. Interacts with DEF1; the interaction is direct and serves to bridge RPB1 to the Elongin complex in a DNA-damaged dependent manner. Interacts with the Elongin subunit ELA1. Interacts with the Elongin subunit ELC1. Interacts with ASK10. Interacts with ESS1. Interacts with RTT103. Interacts with SHE2. Post-translationally, the tandem 7 residues repeats in the C-terminal domain (CTD) can be highly phosphorylated. The phosphorylation activates Pol II. Phosphorylation occurs mainly at residues 'Ser-2' and 'Ser-5' of the heptapeptide repeat. The phosphorylated form of Pol II appears to carry, on average, one phosphate per repeat. The phosphorylation state is believed to result from the balanced action of site-specific CTD kinases and phosphatases, and a 'CTD code' that specifies the position of Pol II within the transcription cycle has been proposed. Phosphorylation at 'Ser-5' occurs in promoter-proximal regions in early elongation. Phosphorylation at 'Ser-2' predominates in regions more distal to the promoter and triggers binding of the 3' RNA processing machinery. CTD kinases include KIN28 (as part of the TFKII complex, a subcomplex of the TFIIH holo complex), SSN3/SRB10 (as part of the SRB8-11 complex, a module of the Mediator complex), CTK1 (as part of CTD kinase), and probably BUR1 (as part of the BUR1-BUR2 kinase complex). Phosphatases include FCP1 and SSU72. Following transcription stress, the elongating form of RNA polymerase II (RNA pol IIo) is polyubiquitinated via 'Lys-63'-linkages on Lys-1246 by the RSP5-UBA1-UBC5 complex at DNA damage sites without leading to degradation: ubiquitination promotes RNA pol IIo backtracking to allow access by the transcription-coupled nucleotide excision repair (TC-NER) machinery. Subsequent DEF1-dependent polyubiquitination by the elongin complex via 'Lys-48'-linkages may lead to proteasome-mediated degradation; presumably at stalled RNA pol II where TC-NER has failed, to halt global transcription and enable 'last resort' DNA repair pathways.

The protein localises to the nucleus. It carries out the reaction RNA(n) + a ribonucleoside 5'-triphosphate = RNA(n+1) + diphosphate. DNA-dependent RNA polymerase catalyzes the transcription of DNA into RNA using the four ribonucleoside triphosphates as substrates. Largest and catalytic component of RNA polymerase II which synthesizes mRNA precursors and many functional non-coding RNAs. Forms the polymerase active center together with the second largest subunit. Pol II is the central component of the basal RNA polymerase II transcription machinery. During a transcription cycle, Pol II, general transcription factors and the Mediator complex assemble as the preinitiation complex (PIC) at the promoter. 11-15 base pairs of DNA surrounding the transcription start site are melted and the single-stranded DNA template strand of the promoter is positioned deeply within the central active site cleft of Pol II to form the open complex. After synthesis of about 30 bases of RNA, Pol II releases its contacts with the core promoter and the rest of the transcription machinery (promoter clearance) and enters the stage of transcription elongation in which it moves on the template as the transcript elongates. Pol II appears to oscillate between inactive and active conformations at each step of nucleotide addition. Elongation is influenced by the phosphorylation status of the C-terminal domain (CTD) of Pol II largest subunit (RPB1), which serves as a platform for assembly of factors that regulate transcription initiation, elongation, termination and mRNA processing. Pol II is composed of mobile elements that move relative to each other. The core element with the central large cleft comprises RPB3, RBP10, RPB11, RPB12 and regions of RPB1 and RPB2 forming the active center. The clamp element (portions of RPB1, RPB2 and RPB3) is connected to the core through a set of flexible switches and moves to open and close the cleft. A bridging helix emanates from RPB1 and crosses the cleft near the catalytic site and is thought to promote translocation of Pol II by acting as a ratchet that moves the RNA-DNA hybrid through the active site by switching from straight to bent conformations at each step of nucleotide addition. In elongating Pol II, the lid loop (RPB1) appears to act as a wedge to drive apart the DNA and RNA strands at the upstream end of the transcription bubble and guide the RNA strand toward the RNA exit groove located near the base of the largely unstructured CTD domain of RPB1. The rudder loop (RPB1) interacts with single-stranded DNA after separation from the RNA strand, likely preventing reassociation with the exiting RNA. The cleft is surrounded by jaws: an upper jaw formed by portions of RBP1, RPB2 and RPB9, and a lower jaw, formed by RPB5 and portions of RBP1. The jaws are thought to grab the incoming DNA template, mainly by RPB5 direct contacts to DNA. The polypeptide is DNA-directed RNA polymerase II subunit RPB1 (RPO21) (Saccharomyces cerevisiae (strain ATCC 204508 / S288c) (Baker's yeast)).